The following is a 132-amino-acid chain: Ribosome-binding factor A (132 aa).

Belongs to the RbfA family. In terms of assembly, monomer. Binds 30S ribosomal subunits, but not 50S ribosomal subunits or 70S ribosomes.

Its subcellular location is the cytoplasm. One of several proteins that assist in the late maturation steps of the functional core of the 30S ribosomal subunit. Associates with free 30S ribosomal subunits (but not with 30S subunits that are part of 70S ribosomes or polysomes). Required for efficient processing of 16S rRNA. May interact with the 5'-terminal helix region of 16S rRNA. The sequence is that of Ribosome-binding factor A from Pseudomonas putida (strain W619).